The primary structure comprises 110 residues: U1-lycotoxin-Ls1ii (110 aa).

Positions 1–20 are cleaved as a signal peptide; that stretch reads MKFVLLFGVLLVTLFSYSSA. Positions 21 to 44 are excised as a propeptide; the sequence is EMLDDFDQADEDELLSLIEKEEAR. 4 disulfides stabilise this stretch: C47/C62, C54/C71, C61/C89, and C73/C87.

This sequence belongs to the neurotoxin 19 (CSTX) family. 03 subfamily. In terms of tissue distribution, expressed by the venom gland.

The protein localises to the secreted. This is U1-lycotoxin-Ls1ii from Lycosa singoriensis (Wolf spider).